The chain runs to 255 residues: Acetylglutamate kinase (255 aa).

Residues Gly40–Gly41, Arg62, and Asn153 contribute to the substrate site.

Belongs to the acetylglutamate kinase family. ArgB subfamily.

Its subcellular location is the cytoplasm. The enzyme catalyses N-acetyl-L-glutamate + ATP = N-acetyl-L-glutamyl 5-phosphate + ADP. Its pathway is amino-acid biosynthesis; L-arginine biosynthesis; N(2)-acetyl-L-ornithine from L-glutamate: step 2/4. In terms of biological role, catalyzes the ATP-dependent phosphorylation of N-acetyl-L-glutamate. This Bacillus thuringiensis subsp. konkukian (strain 97-27) protein is Acetylglutamate kinase.